The sequence spans 241 residues: Guanosine phosphorylase (241 aa).

Belongs to the PNP/UDP phosphorylase family.

It carries out the reaction guanosine + phosphate = alpha-D-ribose 1-phosphate + guanine. It catalyses the reaction a purine D-ribonucleoside + phosphate = a purine nucleobase + alpha-D-ribose 1-phosphate. The enzyme catalyses inosine + phosphate = alpha-D-ribose 1-phosphate + hypoxanthine. The catalysed reaction is adenosine + phosphate = alpha-D-ribose 1-phosphate + adenine. Activity is higher at low KCl concentrations. Its function is as follows. Phosphorylase involved in the non-carboxylating pentose bisphosphate pathway, a nucleoside degradation pathway present in some halophilic archaea. Catalyzes the phosphorolytic cleavage of guanosine to guanine and ribose-1-phosphate (R1P). Exhibits the highest activity toward guanosine, but also shows lower activity against inosine and adenosine. In Halorubrum lacusprofundi (strain ATCC 49239 / DSM 5036 / JCM 8891 / ACAM 34), this protein is Guanosine phosphorylase.